The following is a 469-amino-acid chain: Glutamate--tRNA ligase 1 (469 aa).

A 'HIGH' region motif is present at residues P10 to G20. The 'KMSKS' region signature appears at K252–R256. Residue K255 participates in ATP binding.

This sequence belongs to the class-I aminoacyl-tRNA synthetase family. Glutamate--tRNA ligase type 1 subfamily. Monomer.

It localises to the cytoplasm. It catalyses the reaction tRNA(Glu) + L-glutamate + ATP = L-glutamyl-tRNA(Glu) + AMP + diphosphate. In terms of biological role, catalyzes the attachment of glutamate to tRNA(Glu) in a two-step reaction: glutamate is first activated by ATP to form Glu-AMP and then transferred to the acceptor end of tRNA(Glu). The sequence is that of Glutamate--tRNA ligase 1 from Fervidobacterium nodosum (strain ATCC 35602 / DSM 5306 / Rt17-B1).